The chain runs to 678 residues: NADPH--cytochrome P450 reductase (678 aa).

An N-acetylglycine modification is found at G2. At 2–22 (GDSHEDTSATVPEAVAEEVSL) the chain is on the lumenal side. A helical membrane pass occupies residues 23–43 (FSTTDIVLFSLIVGVLTYWFI). Residues 44–678 (FKKKKEEIPE…KGRYSLDVWS (635 aa)) lie on the Cytoplasmic side of the membrane. Residues 80–224 (IIVFYGSQTG…DFITWREQFW (145 aa)) enclose the Flavodoxin-like domain. Residues 86 to 91 (SQTGTA), 138 to 141 (ATYG), 173 to 182 (LGNKTYEHFN), and D208 contribute to the FMN site. The FAD-binding FR-type domain maps to 279 to 521 (KNPFLAAVTT…FVRKSQFRLP (243 aa)). R298 contributes to the NADP(+) binding site. Residues R424, 454-457 (RYYS), 472-474 (CAV), Y478, and 488-491 (GVAT) contribute to the FAD site. NADP(+) contacts are provided by residues T535, 596–597 (SR), 602–606 (KVYVQ), and D639. Position 677 (W677) interacts with FAD.

It belongs to the NADPH--cytochrome P450 reductase family. In the N-terminal section; belongs to the flavodoxin family. This sequence in the C-terminal section; belongs to the flavoprotein pyridine nucleotide cytochrome reductase family. FAD serves as cofactor. The cofactor is FMN.

The protein resides in the endoplasmic reticulum membrane. The catalysed reaction is 2 oxidized [cytochrome P450] + NADPH = 2 reduced [cytochrome P450] + NADP(+) + H(+). Its function is as follows. This enzyme is required for electron transfer from NADP to cytochrome P450 in microsomes. It can also provide electron transfer to heme oxygenase and cytochrome B5. This Mus musculus (Mouse) protein is NADPH--cytochrome P450 reductase.